Reading from the N-terminus, the 77-residue chain is Sec-independent protein translocase protein TatA (77 aa).

Residues 1–21 traverse the membrane as a helical segment; that stretch reads MGSLSIWHWILVIAVVLLLFG. Over residues 42–60 the composition is skewed to basic and acidic residues; that stretch reads GMQDDDKPADKPEPAKSIE. The segment at 42 to 77 is disordered; the sequence is GMQDDDKPADKPEPAKSIEHNAAPTAARSDVGSKAV.

It belongs to the TatA/E family. The Tat system comprises two distinct complexes: a TatABC complex, containing multiple copies of TatA, TatB and TatC subunits, and a separate TatA complex, containing only TatA subunits. Substrates initially bind to the TatABC complex, which probably triggers association of the separate TatA complex to form the active translocon.

The protein localises to the cell inner membrane. In terms of biological role, part of the twin-arginine translocation (Tat) system that transports large folded proteins containing a characteristic twin-arginine motif in their signal peptide across membranes. TatA could form the protein-conducting channel of the Tat system. The protein is Sec-independent protein translocase protein TatA of Bradyrhizobium diazoefficiens (strain JCM 10833 / BCRC 13528 / IAM 13628 / NBRC 14792 / USDA 110).